A 274-amino-acid chain; its full sequence is NAD kinase (274 aa).

The active-site Proton acceptor is the Asp60. Residues 60–61, Lys65, 127–128, and Arg152 each bind NAD(+); these read DG and NE.

The protein belongs to the NAD kinase family. Requires a divalent metal cation as cofactor.

The protein resides in the cytoplasm. It carries out the reaction NAD(+) + ATP = ADP + NADP(+) + H(+). Involved in the regulation of the intracellular balance of NAD and NADP, and is a key enzyme in the biosynthesis of NADP. Catalyzes specifically the phosphorylation on 2'-hydroxyl of the adenosine moiety of NAD to yield NADP. This chain is NAD kinase, found in Mycoplasmoides gallisepticum (strain R(low / passage 15 / clone 2)) (Mycoplasma gallisepticum).